The primary structure comprises 417 residues: Cysteate synthase (417 aa).

Lysine 102 carries the N6-(pyridoxal phosphate)lysine modification. Residues asparagine 128 and threonine 380 each coordinate pyridoxal 5'-phosphate.

Belongs to the threonine synthase family. Cysteate synthase subfamily. In terms of assembly, homotrimer. Requires pyridoxal 5'-phosphate as cofactor.

The enzyme catalyses O-phospho-L-serine + sulfite + H(+) = L-cysteate + phosphate. The protein operates within cofactor biosynthesis; coenzyme M biosynthesis. Functionally, specifically catalyzes the beta-elimination of phosphate from L-phosphoserine and the beta-addition of sulfite to the dehydroalanine intermediate to produce L-cysteate. This Methanocella arvoryzae (strain DSM 22066 / NBRC 105507 / MRE50) protein is Cysteate synthase.